The chain runs to 706 residues: Serine/threonine-protein kinase BUR1 (706 aa).

The Protein kinase domain maps to 38–339 (YKPLGKIGEG…AIGGKNHAYF (302 aa)). ATP-binding positions include 44–52 (IGEGTFGEV) and lysine 67. Aspartate 168 serves as the catalytic Proton acceptor. Composition is skewed to basic and acidic residues over residues 360–523 (LDNH…RDSR), 545–570 (DYDRERDEDDRRRRPLPRDSSRDMTR), and 594–623 (DKVEDKGESHNKDDKPCDTENPRDSDKSRD). The disordered stretch occupies residues 360–706 (LDNHKRREQE…YGRKRPRIER (347 aa)). Positions 625–648 (GPPPGPPLPADGPPPPPSSNPPRP) are enriched in pro residues. The segment covering 659 to 706 (WRRDSRDRRESRDRDGRDRDGRDRRLSSSRYARDEFDEYGRKRPRIER) has biased composition (basic and acidic residues).

It belongs to the protein kinase superfamily. CMGC Ser/Thr protein kinase family. CDC2/CDKX subfamily.

The protein resides in the nucleus. The catalysed reaction is L-seryl-[protein] + ATP = O-phospho-L-seryl-[protein] + ADP + H(+). It carries out the reaction L-threonyl-[protein] + ATP = O-phospho-L-threonyl-[protein] + ADP + H(+). The enzyme catalyses [DNA-directed RNA polymerase] + ATP = phospho-[DNA-directed RNA polymerase] + ADP + H(+). Its function is as follows. Serine/threonine-protein kinase involved in transcription regulation. Phosphorylates the UBC2/RAD6 ubiquitin-conjugating enzyme (E2), leading to monoubiquitination of histone H2B and the silencing of telomeric-associated genes. Also required for histone H3 methylation. Necessary for the recovery from pheromone-induced growth arrest in the cell cycle G1 phase. In Yarrowia lipolytica (strain CLIB 122 / E 150) (Yeast), this protein is Serine/threonine-protein kinase BUR1 (BUR1).